The sequence spans 306 residues: Curved DNA-binding protein (306 aa).

The 65-residue stretch at 5–69 (DYYAIMGVKP…QRRAEYDQMW (65 aa)) folds into the J domain.

It localises to the cytoplasm. It is found in the nucleoid. Its function is as follows. DNA-binding protein that preferentially recognizes a curved DNA sequence. It is probably a functional analog of DnaJ; displays overlapping activities with DnaJ, but functions under different conditions, probably acting as a molecular chaperone in an adaptive response to environmental stresses other than heat shock. Lacks autonomous chaperone activity; binds native substrates and targets them for recognition by DnaK. Its activity is inhibited by the binding of CbpM. This Escherichia coli O157:H7 protein is Curved DNA-binding protein.